We begin with the raw amino-acid sequence, 185 residues long: Tetratricopeptide repeat protein 36 homolog (185 aa).

TPR repeat units lie at residues Ser-53–Ala-86, Val-88–Gln-119, and Cys-125–Phe-158.

This sequence belongs to the TTC36 family.

This chain is Tetratricopeptide repeat protein 36 homolog, found in Drosophila melanogaster (Fruit fly).